Reading from the N-terminus, the 137-residue chain is Large ribosomal subunit protein uL16 (137 aa).

Belongs to the universal ribosomal protein uL16 family. Part of the 50S ribosomal subunit.

Functionally, binds 23S rRNA and is also seen to make contacts with the A and possibly P site tRNAs. This chain is Large ribosomal subunit protein uL16, found in Mycoplasma mycoides subsp. mycoides SC (strain CCUG 32753 / NCTC 10114 / PG1).